Consider the following 86-residue polypeptide: MKSIVFVALFGLALLAVVCSASEDAHKELLKEVVRAMVVDKTDAVQAEERECRWYLGGCSQDGDCCKHLQCHSNYEWCVWDGTFSK.

Residues 1-21 (MKSIVFVALFGLALLAVVCSA) form the signal peptide. The propeptide occupies 22-50 (SEDAHKELLKEVVRAMVVDKTDAVQAEER). Intrachain disulfides connect cysteine 52–cysteine 66, cysteine 59–cysteine 71, and cysteine 65–cysteine 78.

The protein belongs to the neurotoxin 10 (Hwtx-1) family. 17 (Hntx-9) subfamily. In terms of tissue distribution, expressed by the venom gland.

Its subcellular location is the secreted. Functionally, ion channel inhibitor. The chain is Omega-theraphotoxin-Hhn1a 1 from Cyriopagopus hainanus (Chinese bird spider).